A 325-amino-acid polypeptide reads, in one-letter code: MSWLSPEVTEILLTVLKAVVILLVVVTCGAFMSMGERRLLGLFQNRYGPNRVGYAGSAQLIADMIKMFFKEDWIPKFADRFIFTIAPVIAFSSLLLSFAIVPVSSTWVVADLNIGILFFLMVAGLAVYAVLFAGWSSNNKYSLLGAMRASAQTVSYEVFLGLSILGVVAQAGSFNLTDIVNSQAHMWNIIPQFFGFITFAIAGVAVCHRHPFDQPEAEQELADGYHIEYSGMKFGLFFVGEYIGIVAVSGLIVTLFFGGWQGPFLPSFVWFALKTGFFMMMFILIRASLPRPRYDQVMAFGWKICLPLTLINLLVTAAVILYNAQ.

8 consecutive transmembrane segments (helical) span residues 11–31 (ILLTVLKAVVILLVVVTCGAF), 81–101 (FIFTIAPVIAFSSLLLSFAIV), 114–134 (IGILFFLMVAGLAVYAVLFAG), 154–174 (VSYEVFLGLSILGVVAQAGSF), 186–206 (MWNIIPQFFGFITFAIAGVAV), 237–257 (FFVGEYIGIVAVSGLIVTLFF), 265–285 (LPSFVWFALKTGFFMMMFILI), and 304–324 (ICLPLTLINLLVTAAVILYNA).

This sequence belongs to the complex I subunit 1 family. As to quaternary structure, NDH-1 is composed of 13 different subunits. Subunits NuoA, H, J, K, L, M, N constitute the membrane sector of the complex.

It localises to the cell inner membrane. The catalysed reaction is a quinone + NADH + 5 H(+)(in) = a quinol + NAD(+) + 4 H(+)(out). In terms of biological role, NDH-1 shuttles electrons from NADH, via FMN and iron-sulfur (Fe-S) centers, to quinones in the respiratory chain. The immediate electron acceptor for the enzyme in this species is believed to be ubiquinone. Couples the redox reaction to proton translocation (for every two electrons transferred, four hydrogen ions are translocated across the cytoplasmic membrane), and thus conserves the redox energy in a proton gradient. This subunit may bind ubiquinone. The sequence is that of NADH-quinone oxidoreductase subunit H from Proteus mirabilis (strain HI4320).